A 227-amino-acid polypeptide reads, in one-letter code: Transmembrane emp24 domain-containing protein 1 (227 aa).

A signal peptide spans 1-23; that stretch reads MMAAGAALALALWLLMPPVGVGG. Over 24–194 the chain is Extracellular; the sequence is AGPPPIQDGE…LQEGNLERVN (171 aa). The 83-residue stretch at 43–125 folds into the GOLD domain; that stretch reads KQCFYQSAPA…EKLVFFELIF (83 aa). Residues 145–170 are a coiled coil; sequence EMLDVKMEDIKESIETMRTRLERSIQ. Residues 195-215 traverse the membrane as a helical segment; it reads FWSAVNVAVLLLVAVLQVCTL. Residues 216-227 lie on the Cytoplasmic side of the membrane; the sequence is KRFFQDKRPVPT. The COPII vesicle coat-binding signature appears at 218–219; sequence FF. The COPI vesicle coat-binding signature appears at 218–227; sequence FFQDKRPVPT.

This sequence belongs to the EMP24/GP25L family. As to quaternary structure, homodimer in endoplasmic reticulum, endoplasmic reticulum-Golgi intermediate compartment and cis-Golgi network. Interacts with IL1RL1. Interacts with RNF26; this interaction is important to modulate innate immune signaling through the cGAS-STING pathway.

The protein localises to the cell membrane. The protein resides in the endoplasmic reticulum membrane. It localises to the golgi apparatus. Its subcellular location is the cis-Golgi network membrane. It is found in the endoplasmic reticulum-Golgi intermediate compartment membrane. Functionally, potential role in vesicular protein trafficking, mainly in the early secretory pathway. May act as a cargo receptor at the lumenal side for incorporation of secretory cargo molecules into transport vesicles and may be involved in vesicle coat formation at the cytoplasmic side. Plays a positive role in IL-33-mediated IL-8 and IL-6 production by interacting with interleukin-33 receptor IL1RL1. Plays also a role in the modulation of innate immune signaling through the cGAS-STING pathway by interacting with RNF26. The polypeptide is Transmembrane emp24 domain-containing protein 1 (TMED1) (Pongo abelii (Sumatran orangutan)).